Reading from the N-terminus, the 81-residue chain is Acyl carrier protein (81 aa).

The region spanning Asp-4–Lys-79 is the Carrier domain. Ser-39 bears the O-(pantetheine 4'-phosphoryl)serine mark.

The protein belongs to the acyl carrier protein (ACP) family. In terms of processing, 4'-phosphopantetheine is transferred from CoA to a specific serine of apo-ACP by AcpS. This modification is essential for activity because fatty acids are bound in thioester linkage to the sulfhydryl of the prosthetic group.

The protein resides in the cytoplasm. It functions in the pathway lipid metabolism; fatty acid biosynthesis. In terms of biological role, carrier of the growing fatty acid chain in fatty acid biosynthesis. This is Acyl carrier protein from Synechococcus sp. (strain JA-3-3Ab) (Cyanobacteria bacterium Yellowstone A-Prime).